A 343-amino-acid chain; its full sequence is MKYLSIKSASDKIKSGLLKTGVILSFSLFSSLSTAAFEVVALGVDGGVSDGNLTSYLIRNDSQPLYLGLDAGSVLPGIARALEKGHFAAITDAMAAPLTRQGYIFRQSINSYFISHAHLDHVSGLIIGSPDDSKKTIYASADTIDVLRNYYFNWRVWPNFTDSGSGARLGTYRMQVVRPAQSLSLGLTRLTGEMYPLSHDKSPSSMLLISSNNEFFAYFGDTGPDDVEKSKNLDTVWRKLAEKVTQQQLKGMIIEVSYPNDVADNKLFGHMTPTWLLKELKKLEQYSGEGQPLKGLPVVISHIKPSFQQGQDVRKLILSELQQGNDMGIEFILMEQGDSQKFQ.

The signal sequence occupies residues 1–36 (MKYLSIKSASDKIKSGLLKTGVILSFSLFSSLSTAA).

This sequence belongs to the cyclic nucleotide phosphodiesterase class-II family.

The protein resides in the periplasm. The enzyme catalyses a nucleoside 3',5'-cyclic phosphate + H2O = a nucleoside 5'-phosphate + H(+). The sequence is that of Probable 3',5'-cyclic-nucleotide phosphodiesterase (cpdP) from Yersinia pestis.